The sequence spans 436 residues: GTPase Der (436 aa).

EngA-type G domains follow at residues 4–167 (PTVA…PVEE) and 175–351 (IRFS…ESQN). GTP-binding positions include 10–17 (GRPNVGKS), 57–61 (DTGGI), 119–122 (NKVD), 181–188 (GRPNVGKS), 229–233 (DTAGM), and 294–297 (NKWD). Positions 352–436 (KRIPSAVLND…PIHLIARKRK (85 aa)) constitute a KH-like domain.

It belongs to the TRAFAC class TrmE-Era-EngA-EngB-Septin-like GTPase superfamily. EngA (Der) GTPase family. Associates with the 50S ribosomal subunit.

Functionally, GTPase that plays an essential role in the late steps of ribosome biogenesis. The protein is GTPase Der of Streptococcus pyogenes serotype M28 (strain MGAS6180).